The primary structure comprises 362 residues: Putative protein ARB2BP (362 aa).

The helical transmembrane segment at 229–245 threads the bilayer; it reads IAFIVHGYGGLVFMDLL.

Belongs to the ARB2 family.

The protein resides in the membrane. The chain is Putative protein ARB2BP from Homo sapiens (Human).